A 166-amino-acid polypeptide reads, in one-letter code: 3-isopropylmalate dehydratase small subunit (166 aa).

This sequence belongs to the LeuD family. LeuD type 2 subfamily. As to quaternary structure, heterodimer of LeuC and LeuD.

It catalyses the reaction (2R,3S)-3-isopropylmalate = (2S)-2-isopropylmalate. It functions in the pathway amino-acid biosynthesis; L-leucine biosynthesis; L-leucine from 3-methyl-2-oxobutanoate: step 2/4. In terms of biological role, catalyzes the isomerization between 2-isopropylmalate and 3-isopropylmalate, via the formation of 2-isopropylmaleate. In Nautilia profundicola (strain ATCC BAA-1463 / DSM 18972 / AmH), this protein is 3-isopropylmalate dehydratase small subunit.